A 326-amino-acid chain; its full sequence is Malate dehydrogenase (326 aa).

12–18 contributes to the NAD(+) binding site; the sequence is GAAGQIA. Residues Arg93 and Arg99 each contribute to the substrate site. NAD(+) contacts are provided by residues Asn106, Gln113, and 130–132; that span reads VGN. Residues Asn132 and Arg163 each contribute to the substrate site. His188 functions as the Proton acceptor in the catalytic mechanism.

The protein belongs to the LDH/MDH superfamily. MDH type 2 family.

It carries out the reaction (S)-malate + NAD(+) = oxaloacetate + NADH + H(+). Its function is as follows. Catalyzes the reversible oxidation of malate to oxaloacetate. The chain is Malate dehydrogenase from Corynebacterium diphtheriae (strain ATCC 700971 / NCTC 13129 / Biotype gravis).